A 198-amino-acid chain; its full sequence is MSVIPYVIEQTSRGERSYDIFSRLLKDRIIFLGNAINDDYANVITAQLLFLEAENPERDIYLYLNSPGGYVSSGLAIYDTMQYIKPDVRTLCLGQASSMAALLLAGGAAGKRSALPNARIMMHQPMGGATGQASDIEIQAREVLKLKEILNSIYHKHTGKTVEQIQKDTERNFYMTADEAKNYGIIDTVIQIDRKQTE.

The active-site Nucleophile is the Ser-98. Residue His-123 is part of the active site.

It belongs to the peptidase S14 family. As to quaternary structure, fourteen ClpP subunits assemble into 2 heptameric rings which stack back to back to give a disk-like structure with a central cavity, resembling the structure of eukaryotic proteasomes.

The protein localises to the cytoplasm. It catalyses the reaction Hydrolysis of proteins to small peptides in the presence of ATP and magnesium. alpha-casein is the usual test substrate. In the absence of ATP, only oligopeptides shorter than five residues are hydrolyzed (such as succinyl-Leu-Tyr-|-NHMec, and Leu-Tyr-Leu-|-Tyr-Trp, in which cleavage of the -Tyr-|-Leu- and -Tyr-|-Trp bonds also occurs).. In terms of biological role, cleaves peptides in various proteins in a process that requires ATP hydrolysis. Has a chymotrypsin-like activity. Plays a major role in the degradation of misfolded proteins. The polypeptide is ATP-dependent Clp protease proteolytic subunit 1 (Leptospira interrogans serogroup Icterohaemorrhagiae serovar copenhageni (strain Fiocruz L1-130)).